The chain runs to 302 residues: MRSSIHASRLRKMGQSIPASTGPMARSANRFLQNRAAIFGLVLLTPLLFAVLTYPLWLPYKPNDIDLMAMNSAPSWKHWFGTDGVGRDVFARTMEGGRISLLVAVSSVVLSTAIGFLIGAISALGGRWADAIAMRSVDLAMTLPPVIFLLVLASIIGSGIWSTVVVIALLSWPVLSRMIRARLLELREREFVMASRGMGAGLGHLLFRHGLPNSIDILVVYATLQVANAILLEAGLSFLGLGVPPPAASWSNMLNAARSTAVLEQFPWQWLFPGGALVLAVLAINFIGDGLRDAFDPRAELN.

Residues 1–22 (MRSSIHASRLRKMGQSIPASTG) form a disordered region. Helical transmembrane passes span 38–58 (IFGLVLLTPLLFAVLTYPLWL), 101–121 (LLVAVSSVVLSTAIGFLIGAI), 147–167 (IFLLVLASIIGSGIWSTVVVI), 230–250 (ILLEAGLSFLGLGVPPPAASW), and 268–288 (WQWLFPGGALVLAVLAINFIG). Residues 97–288 (GRISLLVAVS…LAVLAINFIG (192 aa)) form the ABC transmembrane type-1 domain.

Belongs to the binding-protein-dependent transport system permease family. In terms of assembly, the complex is composed of two ATP-binding proteins (BMEII0863 and BMEII0864), two transmembrane proteins (BMEII0860 and BMEII0861) and a solute-binding protein (BMEII0859).

The protein localises to the cell inner membrane. Functionally, probably part of an ABC transporter complex that could be involved in peptide import. Probably responsible for the translocation of the substrate across the membrane. The chain is Putative peptide permease protein BMEII0861 from Brucella melitensis biotype 1 (strain ATCC 23456 / CCUG 17765 / NCTC 10094 / 16M).